The following is a 247-amino-acid chain: Myelin-oligodendrocyte glycoprotein (247 aa).

An N-terminal signal peptide occupies residues 1–29 (MASLSRPSLPSCLCSFLLLLLLQVSSSYA). At 30 to 154 (GQFRVIGPRH…EDPFYWVSPG (125 aa)) the chain is on the extracellular side. In terms of domain architecture, Ig-like V-type spans 32–145 (FRVIGPRHPI…EEAAMELKVE (114 aa)). C53 and C127 are disulfide-bonded. N60 is a glycosylation site (N-linked (GlcNAc...) asparagine). A helical transmembrane segment spans residues 155 to 175 (VLVLLAVLPVLLLQITVGLIF). Over 176–210 (LCLQYRLRGKLRAEIENLHRTFDPHFLRVPCWKIT) the chain is Cytoplasmic. The helical transmembrane segment at 211-231 (LFVIVPVLGPLVALIICYNWL) threads the bilayer. Residues 232 to 247 (HRRLAGQFLEELRNPF) lie on the Extracellular side of the membrane.

It belongs to the immunoglobulin superfamily. BTN/MOG family. In terms of assembly, homodimer. May form heterodimers between the different isoforms. As to quaternary structure, (Microbial infection) Interacts with rubella virus E2 glycoprotein. As to expression, found exclusively in the CNS, where it is localized on the surface of myelin and oligodendrocyte cytoplasmic membranes.

It localises to the cell membrane. Its function is as follows. Mediates homophilic cell-cell adhesion. Minor component of the myelin sheath. May be involved in completion and/or maintenance of the myelin sheath and in cell-cell communication. (Microbial infection) Acts as a receptor for rubella virus. In Homo sapiens (Human), this protein is Myelin-oligodendrocyte glycoprotein (MOG).